The following is a 197-amino-acid chain: NADH-quinone oxidoreductase subunit C (197 aa).

It belongs to the complex I 30 kDa subunit family. As to quaternary structure, NDH-1 is composed of 14 different subunits. Subunits NuoB, C, D, E, F, and G constitute the peripheral sector of the complex.

Its subcellular location is the cell inner membrane. The enzyme catalyses a quinone + NADH + 5 H(+)(in) = a quinol + NAD(+) + 4 H(+)(out). NDH-1 shuttles electrons from NADH, via FMN and iron-sulfur (Fe-S) centers, to quinones in the respiratory chain. The immediate electron acceptor for the enzyme in this species is believed to be ubiquinone. Couples the redox reaction to proton translocation (for every two electrons transferred, four hydrogen ions are translocated across the cytoplasmic membrane), and thus conserves the redox energy in a proton gradient. This Methylobacillus flagellatus (strain ATCC 51484 / DSM 6875 / VKM B-1610 / KT) protein is NADH-quinone oxidoreductase subunit C.